The chain runs to 206 residues: Stage III sporulation protein AF (206 aa).

2 consecutive transmembrane segments (helical) span residues 1-21 (MSFL…AIVI) and 34-54 (AKMV…FKLF).

It is found in the cell membrane. The polypeptide is Stage III sporulation protein AF (spoIIIAF) (Bacillus subtilis (strain 168)).